Consider the following 84-residue polypeptide: Acetylcholine receptor subunit alpha (84 aa).

The cysteines at positions 7 and 21 are disulfide-linked. N-linked (GlcNAc...) asparagine glycans are attached at residues N20 and N66. Residues C71 and C72 are joined by a disulfide bond.

This sequence belongs to the ligand-gated ion channel (TC 1.A.9) family. Acetylcholine receptor (TC 1.A.9.1) subfamily. Alpha-1/CHRNA1 sub-subfamily. In terms of assembly, one of the alpha chains that assemble within the acetylcholine receptor, a pentamer of two alpha chains, a beta, a delta, and a gamma (in immature muscle) or epsilon (in mature muscle) chains. The muscle heteropentamer composed of alpha-1, beta-1, delta, epsilon subunits interacts with the alpha-conotoxin ImII.

It is found in the postsynaptic cell membrane. Its subcellular location is the cell membrane. It carries out the reaction K(+)(in) = K(+)(out). The catalysed reaction is Na(+)(in) = Na(+)(out). Its function is as follows. Upon acetylcholine binding, the AChR responds by an extensive change in conformation that affects all subunits and leads to opening of an ion-conducting channel across the plasma membrane. The polypeptide is Acetylcholine receptor subunit alpha (CHRNA1) (Herpestes ichneumon (Egyptian mongoose)).